The chain runs to 137 residues: MRNFDLSPLYRSAIGFDRLFNLLENNQSQSNGGYPPYNVELVDENHYRIAIAVAGFAESELEITAQDNLLVVKGAHADEQKERTYLYQGIAERNFERKFQLAENIHVRGANLVNGLLYIDLERVIPEANKPRRIEIN.

The sHSP domain occupies 28–137; sequence SQSNGGYPPY…ANKPRRIEIN (110 aa).

This sequence belongs to the small heat shock protein (HSP20) family. As to quaternary structure, monomer. Forms homomultimers of about 100-150 subunits at optimal growth temperatures. Conformation changes to monomers at high temperatures or high ionic concentrations.

Its subcellular location is the cytoplasm. In terms of biological role, associates with aggregated proteins, together with IbpB, to stabilize and protect them from irreversible denaturation and extensive proteolysis during heat shock and oxidative stress. Aggregated proteins bound to the IbpAB complex are more efficiently refolded and reactivated by the ATP-dependent chaperone systems ClpB and DnaK/DnaJ/GrpE. Its activity is ATP-independent. The sequence is that of Small heat shock protein IbpA from Citrobacter koseri (strain ATCC BAA-895 / CDC 4225-83 / SGSC4696).